The sequence spans 155 residues: 6,7-dimethyl-8-ribityllumazine synthase (155 aa).

5-amino-6-(D-ribitylamino)uracil contacts are provided by residues Phe-22, 56 to 58 (AFE), and 80 to 82 (AVI). A (2S)-2-hydroxy-3-oxobutyl phosphate-binding site is contributed by 85-86 (ST). His-88 (proton donor) is an active-site residue. Phe-113 contacts 5-amino-6-(D-ribitylamino)uracil. (2S)-2-hydroxy-3-oxobutyl phosphate is bound at residue Arg-127.

This sequence belongs to the DMRL synthase family.

It catalyses the reaction (2S)-2-hydroxy-3-oxobutyl phosphate + 5-amino-6-(D-ribitylamino)uracil = 6,7-dimethyl-8-(1-D-ribityl)lumazine + phosphate + 2 H2O + H(+). It participates in cofactor biosynthesis; riboflavin biosynthesis; riboflavin from 2-hydroxy-3-oxobutyl phosphate and 5-amino-6-(D-ribitylamino)uracil: step 1/2. Catalyzes the formation of 6,7-dimethyl-8-ribityllumazine by condensation of 5-amino-6-(D-ribitylamino)uracil with 3,4-dihydroxy-2-butanone 4-phosphate. This is the penultimate step in the biosynthesis of riboflavin. This chain is 6,7-dimethyl-8-ribityllumazine synthase, found in Bifidobacterium longum subsp. infantis (strain ATCC 15697 / DSM 20088 / JCM 1222 / NCTC 11817 / S12).